The chain runs to 430 residues: MSLMTKLGLRALVASCLIAAGGAAHAQLNVLVTGVGSTQFPIATANFANEANSPQQISTIVRQDLQRSGKFTNIDAGSAPVSEGDSVDLGAWKAKGANAFVAGSVTKLPNGQYQVRFKLYDTVNQQSLGGLELVSPEGGLRMSAHKVADYIYAKLMGGRGVFATRLSYVIKTGNRYQLQISDSDGQDAHIALSSPEPIISPAWSPDGTKVAYVSFEKKKPIVYIHDLPTGRRVVVSDQKGNNSAPAWSPDGRTLAVALSRTGNTQIFAVNADGSGLRRLTQGSSIDTEPSYSPDGQSIYFTSDRGGQPQIYKMPASGEASGGAQRVTFTGNYNTSPRVSPDGKQLAYISRTGGGFKLYIQDLQSGVATALTDTTHDESPSFAANGQYILYATQVNGRGVLAAVSTDGRTRQVLSVQGGSVREPSWGPFMQ.

An N-terminal signal peptide occupies residues 1–26 (MSLMTKLGLRALVASCLIAAGGAAHA).

This sequence belongs to the TolB family. As to quaternary structure, the Tol-Pal system is composed of five core proteins: the inner membrane proteins TolA, TolQ and TolR, the periplasmic protein TolB and the outer membrane protein Pal. They form a network linking the inner and outer membranes and the peptidoglycan layer.

It localises to the periplasm. Its function is as follows. Part of the Tol-Pal system, which plays a role in outer membrane invagination during cell division and is important for maintaining outer membrane integrity. This chain is Tol-Pal system protein TolB, found in Paraburkholderia phymatum (strain DSM 17167 / CIP 108236 / LMG 21445 / STM815) (Burkholderia phymatum).